Reading from the N-terminus, the 132-residue chain is Myelin P2 protein (132 aa).

Serine 2 carries the N-acetylserine modification. Arginine 107 provides a ligand contact to (9Z)-octadecenoate. Hexadecanoate is bound at residue arginine 107. A disulfide bond links cysteine 118 and cysteine 125. 127 to 129 (RIY) contacts (9Z)-octadecenoate. Position 127–129 (127–129 (RIY)) interacts with hexadecanoate.

This sequence belongs to the calycin superfamily. Fatty-acid binding protein (FABP) family. As to quaternary structure, monomer.

Its subcellular location is the cytoplasm. In terms of biological role, may play a role in lipid transport protein in Schwann cells. May bind cholesterol. The polypeptide is Myelin P2 protein (Sus scrofa (Pig)).